An 843-amino-acid polypeptide reads, in one-letter code: Glycogen phosphorylase, muscle form (843 aa).

Serine 2 carries the N-acetylserine modification. Position 15 is a phosphoserine; by PHK; in form phosphorylase A (serine 15). AMP contacts are provided by aspartate 43 and tyrosine 76. 2 positions are modified to phosphotyrosine: tyrosine 204 and tyrosine 227. 310–319 (RRFKSSKFGC) provides a ligand contact to AMP. A Phosphoserine modification is found at serine 430. Tyrosine 473 is modified (phosphotyrosine). Serine 514 carries the post-translational modification Phosphoserine. Lysine 681 carries the N6-(pyridoxal phosphate)lysine modification. Serine 747 and serine 748 each carry phosphoserine.

The protein belongs to the glycogen phosphorylase family. As to quaternary structure, homodimer. Homotetramer; to form the enzymatically active phosphorylase A. The cofactor is pyridoxal 5'-phosphate. In terms of processing, phosphorylation of Ser-15 converts phosphorylase B (unphosphorylated) to phosphorylase A.

The enzyme catalyses [(1-&gt;4)-alpha-D-glucosyl](n) + phosphate = [(1-&gt;4)-alpha-D-glucosyl](n-1) + alpha-D-glucose 1-phosphate. Allosterically regulated through the non-covalent binding of metabolites, being activated by AMP and inhibited by ATP, ADP, and glucose-6-phosphate. The activity is also controlled by post-translational modifications including phosphorylation. Its function is as follows. Allosteric enzyme that catalyzes the rate-limiting step in glycogen catabolism, the phosphorolytic cleavage of glycogen to produce glucose-1-phosphate, and plays a central role in maintaining cellular and organismal glucose homeostasis. In Oryctolagus cuniculus (Rabbit), this protein is Glycogen phosphorylase, muscle form.